We begin with the raw amino-acid sequence, 254 residues long: Switch-activating protein 1 (254 aa).

Over residues 1–10 the composition is skewed to basic and acidic residues; that stretch reads MEAPKMELKS. Positions 1–30 are disordered; sequence MEAPKMELKSYKRKNASLSPSSSPAKAQRT. A compositionally biased stretch (low complexity) spans 16–25; that stretch reads ASLSPSSSPA. Residues S17 and S19 each carry the phosphoserine modification. Tandem repeats lie at residues 221–224, 225–228, 229–232, and 233–236. Residues 221–236 form a 4 X 4 AA tandem repeats of G-[ATV]-N-M region; sequence GVNMGTNMGANMGANM.

As to quaternary structure, homodimer.

It is found in the nucleus. Binds to sequences required for mating-type switching. Makes a simultaneous contact with both the alpha and beta domains of the switch-activating site SAS1. Also binds to replication fork barrier 1 (RFB1) located within a 78 base pair sequence near the 3' end of the rRNA coding region. This leads to replication fork blockage. It binds the consensus sequence 5'-TA[AG]GCAGNTN[CT]AACG[AC]G-3'. Functionally, has a role in chromosome organization and integrity where it is involved in chromosome segregation. Has a role in sister chromatid cohesion and condensation. This Schizosaccharomyces pombe (strain 972 / ATCC 24843) (Fission yeast) protein is Switch-activating protein 1 (sap1).